Reading from the N-terminus, the 274-residue chain is Triosephosphate isomerase (274 aa).

13–15 provides a ligand contact to substrate; the sequence is NWK. His98 functions as the Electrophile in the catalytic mechanism. The active-site Proton acceptor is Glu170. Substrate-binding residues include Gly176 and Ser216.

The protein belongs to the triosephosphate isomerase family. As to quaternary structure, homodimer.

The protein localises to the cytoplasm. It catalyses the reaction D-glyceraldehyde 3-phosphate = dihydroxyacetone phosphate. The protein operates within carbohydrate biosynthesis; gluconeogenesis. Its pathway is carbohydrate degradation; glycolysis; D-glyceraldehyde 3-phosphate from glycerone phosphate: step 1/1. Its function is as follows. Involved in the gluconeogenesis. Catalyzes stereospecifically the conversion of dihydroxyacetone phosphate (DHAP) to D-glyceraldehyde-3-phosphate (G3P). This Onion yellows phytoplasma (strain OY-M) protein is Triosephosphate isomerase.